We begin with the raw amino-acid sequence, 393 residues long: Formate-dependent phosphoribosylglycinamide formyltransferase (393 aa).

N(1)-(5-phospho-beta-D-ribosyl)glycinamide is bound by residues glutamate 22–leucine 23 and glutamate 82. ATP contacts are provided by residues arginine 114, lysine 155, serine 160–glutamine 165, glutamate 195–valine 198, and glutamate 203. The region spanning arginine 119–leucine 308 is the ATP-grasp domain. Mg(2+)-binding residues include glutamate 267 and glutamate 279. N(1)-(5-phospho-beta-D-ribosyl)glycinamide-binding positions include aspartate 286, lysine 356, and arginine 363 to arginine 364.

It belongs to the PurK/PurT family. As to quaternary structure, homodimer.

It catalyses the reaction N(1)-(5-phospho-beta-D-ribosyl)glycinamide + formate + ATP = N(2)-formyl-N(1)-(5-phospho-beta-D-ribosyl)glycinamide + ADP + phosphate + H(+). It participates in purine metabolism; IMP biosynthesis via de novo pathway; N(2)-formyl-N(1)-(5-phospho-D-ribosyl)glycinamide from N(1)-(5-phospho-D-ribosyl)glycinamide (formate route): step 1/1. Its function is as follows. Involved in the de novo purine biosynthesis. Catalyzes the transfer of formate to 5-phospho-ribosyl-glycinamide (GAR), producing 5-phospho-ribosyl-N-formylglycinamide (FGAR). Formate is provided by PurU via hydrolysis of 10-formyl-tetrahydrofolate. In Parabacteroides distasonis (strain ATCC 8503 / DSM 20701 / CIP 104284 / JCM 5825 / NCTC 11152), this protein is Formate-dependent phosphoribosylglycinamide formyltransferase.